A 377-amino-acid chain; its full sequence is Nitric oxide reductase FlRd-NAD(+) reductase (377 aa).

Belongs to the FAD-dependent oxidoreductase family. FAD serves as cofactor.

The protein resides in the cytoplasm. The enzyme catalyses 2 reduced [nitric oxide reductase rubredoxin domain] + NAD(+) + H(+) = 2 oxidized [nitric oxide reductase rubredoxin domain] + NADH. The protein operates within nitrogen metabolism; nitric oxide reduction. One of at least two accessory proteins for anaerobic nitric oxide (NO) reductase. Reduces the rubredoxin moiety of NO reductase. The protein is Nitric oxide reductase FlRd-NAD(+) reductase of Escherichia coli (strain SMS-3-5 / SECEC).